The following is a 1167-amino-acid chain: MEPENYLAWLARDIVRNLSYTSLVYNNPKVAIVELLDNKEAFFTYEKEQKTPEALINYIDSIVKSSISVEDKIEALLKIRYISVYVDDKSDKRDIVLQLLNRTIKKIESKTKISNELNDAINAITIESRNWKIQNSESFKPYHYNQLVSDFLKYNEFEILEGTDPLKWKSDTLQGLSPNYNHRTHTLISSIIYATSVRFDNYNDEQLQVLLYLFSIIKTNYVNGYLEILPNRKWSHSLADLRENKSIMMYSAKIIHASCAMISILHAVPIDYFFLAQIIASFSEIPAHAAKQLSSPMTLYIGIAQLRSNIVVSTKIAAESVATESPNISRLEESQLREWEQEMNEYPFQSSRMVRMMKKNIFDVSVDVFYAIFNCFSATFHVGHRIDNPQDAIEAQVKVEYTSDVDKEMYDQYYFLLKRMLTDQLAEYAEEMYFKYNSDVTAESLAAMANSSNGYSRSVTFIDREIKTTKKMLHLDDDLSKNLNFTNIGEQIKKGIPMGTRNVPARQTRGIFILSWQVAAIQHTIAEFLYKKAKKGGFGATFAEAYVSKAATLTYGILAEATSKADQLILYTDVSQWDASQHNTEPYRSAWINAIKEARTKYKINYNQEPVVLGMNVLDKMIEIQEALLNSNLIVESQGSKRQPLRIKYHGVASGEKTTKIGNSFANVALITTVFNNLTNTMPSIRVNHMRVDGDDNVVTMYTANRIDEVQENIKEKYKRMNAKVKALASYTGLEMAKRFIICGKIFERGAISIFTAERPYGTDLSVQSTTGSLIYSAAVNAYRGFGDDYLNFMTDVLVPPSASVKITGRLRSLLSPVTLYSTGPLSFEITPYGLGGRMRLFSLSKENMELYKILTSSLAISIQPDEIKKYSSTPQFKARVDRMISSVQIAMKSEAKIITSILRDKEEQKTLGVPNVATAKNRQQIDKARKTLSLPKEILPKVTKYYPEEIFHLILRNSTLTIPKLNTMTKVYMNNSVNITKLQQQIGVRVSSGIQVHKPINTLLKLVEKHSPIKISPSDLILYSKKYDLTNLNGKKQFLMDLGISGNELRFYLNSKLLFHDLLLSKYDKLYEAPGFGATQLNALPLDLTAAEKVFSIKLNLPNTYYELLMLVLLYEYVNFVMFTGNTFRAVCIPESQTINAKLVKTIMTMIDNIQLDTVMFSDNIF.

A RdRp catalytic domain is found at 553–735 (LTYGILAEAT…KALASYTGLE (183 aa)).

This sequence belongs to the reoviridae RNA-directed RNA polymerase family. Interacts with VP3 (Potential). Interacts with VP2 (Potential). Interacts with NSP5; this interaction is probably necessary for the formation of functional virus factories.

The protein resides in the virion. It catalyses the reaction RNA(n) + a ribonucleoside 5'-triphosphate = RNA(n+1) + diphosphate. Its function is as follows. RNA-directed RNA polymerase that is involved in both transcription and genome replication. Together with VP3 capping enzyme, forms an enzyme complex positioned near the channels situated at each of the five-fold vertices of the core. Following infection, the outermost layer of the virus is lost, leaving a double-layered particle (DLP) made up of the core and VP6 shell. VP1 then catalyzes the transcription of fully conservative plus-strand genomic RNAs that are extruded through the DLP's channels into the cytoplasm where they function as mRNAs for translation of viral proteins. One copy of each of the viral (+)RNAs is also recruited during core assembly, together with newly synthesized polymerase complexes and VP2. The polymerase of these novo-formed particles catalyzes the synthesis of complementary minus-strands leading to dsDNA formation. To do so, the polymerase specifically recognizes conserved 3' sequence(s) in plus-strand RNA templates. Once dsRNA synthesis is complete, the polymerase switches to the transcriptional mode, thus providing secondary transcription. The protein is RNA-directed RNA polymerase of Rotavirus X (isolate RVX/Human/Bangladesh/NADRV-B219/2002/GXP[X]) (RV ADRV-N).